The chain runs to 550 residues: Hydroxylamine reductase (550 aa).

[2Fe-2S] cluster is bound by residues C3, C6, C18, and C25. Hybrid [4Fe-2O-2S] cluster contacts are provided by H249, E273, C317, C405, C433, C458, E492, and K494. C405 is subject to Cysteine persulfide.

This sequence belongs to the HCP family. It depends on [2Fe-2S] cluster as a cofactor. Requires hybrid [4Fe-2O-2S] cluster as cofactor.

The protein localises to the cytoplasm. The catalysed reaction is A + NH4(+) + H2O = hydroxylamine + AH2 + H(+). In terms of biological role, catalyzes the reduction of hydroxylamine to form NH(3) and H(2)O. This chain is Hydroxylamine reductase, found in Escherichia coli O7:K1 (strain IAI39 / ExPEC).